The chain runs to 106 residues: UPF0145 protein PP_2873 (106 aa).

Belongs to the UPF0145 family.

This Pseudomonas putida (strain ATCC 47054 / DSM 6125 / CFBP 8728 / NCIMB 11950 / KT2440) protein is UPF0145 protein PP_2873.